A 430-amino-acid chain; its full sequence is Toxin coregulated pilus biosynthesis protein B (430 aa).

Over residues 351–366 the composition is skewed to polar residues; that stretch reads NFSSESAKDSQGTTQK. A disordered region spans residues 351–371; that stretch reads NFSSESAKDSQGTTQKDGSKG.

In terms of biological role, involved in TCP pilus biogenesis. The sequence is that of Toxin coregulated pilus biosynthesis protein B (tcpB) from Vibrio cholerae serotype O1 (strain ATCC 39315 / El Tor Inaba N16961).